The following is a 117-amino-acid chain: MKKVLNFHFSYIYTYFITITTNYKYGDTEKIFRKFRSYIYNHDKNSHVFSIKETTKNSNGLHYHILVFTNKKLDYSRVHKHMPSHSDIRIELVPKSISDIKNVYKYMLKTKKDIKMS.

A helical membrane pass occupies residues 4–26 (VLNFHFSYIYTYFITITTNYKYG).

The protein localises to the host membrane. This is an uncharacterized protein from Sulfolobus islandicus rod-shaped virus 1 (SIRV-1).